A 143-amino-acid polypeptide reads, in one-letter code: Transcriptional regulator MraZ (143 aa).

SpoVT-AbrB domains lie at 5 to 47 and 76 to 119; these read TFTP…PKAE and ADEQ…DAES.

Belongs to the MraZ family. Forms oligomers.

It is found in the cytoplasm. Its subcellular location is the nucleoid. In Corynebacterium jeikeium (strain K411), this protein is Transcriptional regulator MraZ.